Here is a 381-residue protein sequence, read N- to C-terminus: Anti-sigma-I factor RsgI (381 aa).

The Cytoplasmic segment spans residues 1-63 (MRRGIIVEKN…FDFFKLRPFK (63 aa)). One can recognise a RsgI N-terminal anti-sigma domain in the interval 2–50 (RRGIIVEKNKKFVTLLTPDGQFLKAKNDRHSYEIGEEIMLPSETRMGRR). Residues 64–84 (MGIFTMTAIMLFIFIVLPVFS) form a helical membrane-spanning segment. Residues 85 to 381 (NNKAYAYMTI…NEDSPSAPGE (297 aa)) are Extracellular-facing. A disordered region spans residues 198-381 (SDMQTREKAK…NEDSPSAPGE (184 aa)). 4 stretches are compositionally biased toward basic and acidic residues: residues 200–210 (MQTREKAKKEG), 219–244 (SNEK…QKSD), 273–321 (GDQK…DKGN), and 349–359 (SRRDNASDRRN).

In terms of assembly, interacts (via RsgI N-terminal anti-sigma domain) with SigI.

The protein localises to the cell membrane. Functionally, anti-sigma factor for SigI. Negatively regulates SigI activity through direct interaction. The chain is Anti-sigma-I factor RsgI from Bacillus subtilis (strain 168).